The primary structure comprises 426 residues: Histidine--tRNA ligase (426 aa).

This sequence belongs to the class-II aminoacyl-tRNA synthetase family.

It localises to the cytoplasm. It carries out the reaction tRNA(His) + L-histidine + ATP = L-histidyl-tRNA(His) + AMP + diphosphate + H(+). The chain is Histidine--tRNA ligase from Saccharolobus islandicus (strain M.16.27) (Sulfolobus islandicus).